The following is a 270-amino-acid chain: Diaminopimelate epimerase (270 aa).

Substrate is bound by residues N15, Q49, and N66. The active-site Proton donor is the C75. Residues 76-77 (GN), N155, N187, and 204-205 (ER) each bind substrate. C213 (proton acceptor) is an active-site residue. Residue 214 to 215 (GS) participates in substrate binding.

The protein belongs to the diaminopimelate epimerase family. Homodimer.

The protein resides in the cytoplasm. The enzyme catalyses (2S,6S)-2,6-diaminopimelate = meso-2,6-diaminopimelate. Its pathway is amino-acid biosynthesis; L-lysine biosynthesis via DAP pathway; DL-2,6-diaminopimelate from LL-2,6-diaminopimelate: step 1/1. Its function is as follows. Catalyzes the stereoinversion of LL-2,6-diaminopimelate (L,L-DAP) to meso-diaminopimelate (meso-DAP), a precursor of L-lysine and an essential component of the bacterial peptidoglycan. This chain is Diaminopimelate epimerase, found in Rickettsia felis (strain ATCC VR-1525 / URRWXCal2) (Rickettsia azadi).